We begin with the raw amino-acid sequence, 474 residues long: NADH-ubiquinone oxidoreductase chain 4 (474 aa).

A run of 13 helical transmembrane segments spans residues 34-54 (SFFL…DLMF), 86-106 (LYGL…ISTV), 115-135 (LKFY…IKCS), 137-157 (LIAF…VVFF), 167-187 (AVIY…LACL), 211-231 (AMTI…IWPL), 242-262 (ASTG…LFGF), 276-295 (TFFL…NMWS), 302-322 (LVAY…LKGD), 325-345 (LIAY…LMFF), 373-393 (ALAI…LKFV), 405-425 (VSWP…LIGF), and 454-474 (YIIF…FLMI).

Belongs to the complex I subunit 4 family.

It localises to the mitochondrion membrane. The catalysed reaction is a ubiquinone + NADH + 5 H(+)(in) = a ubiquinol + NAD(+) + 4 H(+)(out). Core subunit of the mitochondrial membrane respiratory chain NADH dehydrogenase (Complex I) that is believed to belong to the minimal assembly required for catalysis. Complex I functions in the transfer of electrons from NADH to the respiratory chain. The immediate electron acceptor for the enzyme is believed to be ubiquinone. This Paramecium tetraurelia protein is NADH-ubiquinone oxidoreductase chain 4 (ND4).